A 165-amino-acid chain; its full sequence is UPF0114 protein ESA_00283 (165 aa).

Transmembrane regions (helical) follow at residues 15–35 (LLAP…VKFF), 53–73 (LILL…LVMV), and 136–156 (LMWY…MGYL).

Belongs to the UPF0114 family.

The protein resides in the cell membrane. This is UPF0114 protein ESA_00283 from Cronobacter sakazakii (strain ATCC BAA-894) (Enterobacter sakazakii).